The chain runs to 457 residues: Siroheme synthase (457 aa).

The segment at 1–204 (MDHLPIFCQL…NDQKAITETT (204 aa)) is precorrin-2 dehydrogenase /sirohydrochlorin ferrochelatase. NAD(+)-binding positions include 22 to 23 (DV) and 43 to 44 (LA). A Phosphoserine modification is found at S128. Residues 216-457 (GEVVLVGAGP…RDKLNWFSNH (242 aa)) form a uroporphyrinogen-III C-methyltransferase region. P225 serves as a coordination point for S-adenosyl-L-methionine. The Proton acceptor role is filled by D248. K270 functions as the Proton donor in the catalytic mechanism. Residues 301–303 (GGD), I306, 331–332 (TA), M382, and G411 each bind S-adenosyl-L-methionine.

This sequence in the N-terminal section; belongs to the precorrin-2 dehydrogenase / sirohydrochlorin ferrochelatase family. It in the C-terminal section; belongs to the precorrin methyltransferase family.

It catalyses the reaction uroporphyrinogen III + 2 S-adenosyl-L-methionine = precorrin-2 + 2 S-adenosyl-L-homocysteine + H(+). The enzyme catalyses precorrin-2 + NAD(+) = sirohydrochlorin + NADH + 2 H(+). It carries out the reaction siroheme + 2 H(+) = sirohydrochlorin + Fe(2+). Its pathway is cofactor biosynthesis; adenosylcobalamin biosynthesis; precorrin-2 from uroporphyrinogen III: step 1/1. It functions in the pathway cofactor biosynthesis; adenosylcobalamin biosynthesis; sirohydrochlorin from precorrin-2: step 1/1. It participates in porphyrin-containing compound metabolism; siroheme biosynthesis; precorrin-2 from uroporphyrinogen III: step 1/1. The protein operates within porphyrin-containing compound metabolism; siroheme biosynthesis; siroheme from sirohydrochlorin: step 1/1. Its pathway is porphyrin-containing compound metabolism; siroheme biosynthesis; sirohydrochlorin from precorrin-2: step 1/1. Its function is as follows. Multifunctional enzyme that catalyzes the SAM-dependent methylations of uroporphyrinogen III at position C-2 and C-7 to form precorrin-2 via precorrin-1. Then it catalyzes the NAD-dependent ring dehydrogenation of precorrin-2 to yield sirohydrochlorin. Finally, it catalyzes the ferrochelation of sirohydrochlorin to yield siroheme. This is Siroheme synthase from Escherichia coli O8 (strain IAI1).